A 332-amino-acid chain; its full sequence is Ephrin-B2a (332 aa).

Residues 1 to 24 form the signal peptide; that stretch reads MGDSLWRYYFGVLVIACKVNLSRA. N-linked (GlcNAc...) asparagine glycans are attached at residues asparagine 20 and asparagine 33. One can recognise an Ephrin RBD domain in the interval 25–161; it reads LILDSIYWNT…TKSMKIIMKV (137 aa). Residues 25-225 lie on the Extracellular side of the membrane; it reads LILDSIYWNT…VIGSEVALFA (201 aa). Intrachain disulfides connect cysteine 59–cysteine 98 and cysteine 86–cysteine 150. N-linked (GlcNAc...) asparagine glycosylation occurs at asparagine 136. The tract at residues 162 to 212 is disordered; it reads GQNPSDPISPKDYPTSYPPKHPDLGGKDSKSNEVLKPDASPHGEDKGDGNK. Over residues 181–210 the composition is skewed to basic and acidic residues; it reads KHPDLGGKDSKSNEVLKPDASPHGEDKGDG. A glycan (N-linked (GlcNAc...) asparagine) is linked at asparagine 211. Residues 226–246 form a helical membrane-spanning segment; the sequence is CIASASVIVIIIIIMLVFLLL. Residues 247 to 332 lie on the Cytoplasmic side of the membrane; that stretch reads KYRRRHRKHS…QSPANIYYKV (86 aa). The tract at residues 255 to 285 is disordered; sequence HSPQHATTLSLSTLATPKRGGSGGNNNGSEP. Over residues 260–270 the composition is skewed to low complexity; sequence ATTLSLSTLAT. Positions 330–332 match the PDZ-binding motif; sequence YKV.

This sequence belongs to the ephrin family. In terms of assembly, binds to the receptor tyrosine kinase ephb4. Inducible phosphorylation of tyrosine residues in the cytoplasmic domain.

It is found in the cell membrane. Its function is as follows. Cell surface transmembrane ligand for Eph receptors, a family of receptor tyrosine kinases which are crucial for migration, repulsion and adhesion during neuronal, vascular and epithelial development. Binds promiscuously Eph receptors residing on adjacent cells, leading to contact-dependent bidirectional signaling into neighboring cells. The signaling pathway downstream of the receptor is referred to as forward signaling while the signaling pathway downstream of the ephrin ligand is referred to as reverse signaling. Together with ephb4 may play a central role in heart morphogenesis and angiogenesis through regulation of cell adhesion and cell migration. The sequence is that of Ephrin-B2a (efnb2a) from Danio rerio (Zebrafish).